The chain runs to 431 residues: Glucose-1-phosphate adenylyltransferase (431 aa).

Residue Lys39 coordinates beta-D-fructose 1,6-bisphosphate. AMP is bound by residues Arg40, His46, and Arg52. Alpha-D-glucose 1-phosphate is bound at residue Tyr114. Residue Arg130 coordinates AMP. Alpha-D-glucose 1-phosphate is bound by residues Gly179, 194-195 (EK), and Ser212. Arg386 lines the AMP pocket. 429-431 (QER) contacts beta-D-fructose 1,6-bisphosphate.

The protein belongs to the bacterial/plant glucose-1-phosphate adenylyltransferase family. Homotetramer.

The catalysed reaction is alpha-D-glucose 1-phosphate + ATP + H(+) = ADP-alpha-D-glucose + diphosphate. Its pathway is glycan biosynthesis; glycogen biosynthesis. Allosterically activated by fructose-1,6-bisphosphate (F16BP) and inhibited by AMP. Functionally, involved in the biosynthesis of ADP-glucose, a building block required for the elongation reactions to produce glycogen. Catalyzes the reaction between ATP and alpha-D-glucose 1-phosphate (G1P) to produce pyrophosphate and ADP-Glc. The protein is Glucose-1-phosphate adenylyltransferase of Klebsiella pneumoniae (strain 342).